We begin with the raw amino-acid sequence, 248 residues long: UPF0246 protein lp_0089 (248 aa).

This sequence belongs to the UPF0246 family.

The polypeptide is UPF0246 protein lp_0089 (Lactiplantibacillus plantarum (strain ATCC BAA-793 / NCIMB 8826 / WCFS1) (Lactobacillus plantarum)).